The following is a 251-amino-acid chain: Flap endonuclease Xni (251 aa).

Aspartate 104 serves as a coordination point for Mg(2+). The 90-residue stretch at 160–249 (VLPRQLPDYW…IDGNLQQLRL (90 aa)) folds into the 5'-3' exonuclease domain. The K(+) site is built by leucine 171, alanine 172, proline 180, valine 182, and isoleucine 185. The segment at 184–189 (GIGPKS) is interaction with DNA.

It belongs to the Xni family. Mg(2+) is required as a cofactor. K(+) serves as cofactor.

Its function is as follows. Has flap endonuclease activity. During DNA replication, flap endonucleases cleave the 5'-overhanging flap structure that is generated by displacement synthesis when DNA polymerase encounters the 5'-end of a downstream Okazaki fragment. In Salmonella newport (strain SL254), this protein is Flap endonuclease Xni.